The following is a 586-amino-acid chain: Membrane protein insertase YidC (586 aa).

5 helical membrane-spanning segments follow: residues 5–25 (TLIG…LMAP), 371–391 (GVII…LTMA), 436–456 (LGGC…FYVF), 486–506 (IPLY…AVFF), and 522–542 (FMMY…PSGL).

It belongs to the OXA1/ALB3/YidC family. Type 1 subfamily. As to quaternary structure, interacts with the Sec translocase complex via SecD. Specifically interacts with transmembrane segments of nascent integral membrane proteins during membrane integration.

The protein resides in the cell inner membrane. Required for the insertion and/or proper folding and/or complex formation of integral membrane proteins into the membrane. Involved in integration of membrane proteins that insert both dependently and independently of the Sec translocase complex, as well as at least some lipoproteins. Aids folding of multispanning membrane proteins. The chain is Membrane protein insertase YidC from Chloroherpeton thalassium (strain ATCC 35110 / GB-78).